Reading from the N-terminus, the 305-residue chain is Fe-S cluster assembly protein dre2 (305 aa).

The N-terminal SAM-like domain stretch occupies residues 21 to 150; the sequence is DATQKRTLLL…EKPQYQEAAV (130 aa). Residues 151–195 are linker; that stretch reads PLRFGLKKKNKVAPEPVKVESVGFVDNYDDDELIDEDDLLAEEDL. The [2Fe-2S] cluster site is built by Cys-205, Cys-217, Cys-220, and Cys-222. Residues 205–222 form a fe-S binding site A region; the sequence is CKPDIAKKRRRACKDCTC. Residues Cys-268, Cys-271, Cys-279, and Cys-282 each contribute to the [4Fe-4S] cluster site. Short sequence motifs (cx2C motif) lie at residues 268–271 and 279–282; these read CNSC and CEGC. A fe-S binding site B region spans residues 268–282; that stretch reads CNSCSLGDAFRCEGC.

Belongs to the anamorsin family. Monomer. Interacts with tah18. Interacts with mia40. Requires [2Fe-2S] cluster as cofactor. [4Fe-4S] cluster serves as cofactor.

It localises to the cytoplasm. It is found in the mitochondrion intermembrane space. Functionally, component of the cytosolic iron-sulfur (Fe-S) protein assembly (CIA) machinery required for the maturation of extramitochondrial Fe-S proteins. Part of an electron transfer chain functioning in an early step of cytosolic Fe-S biogenesis, facilitating the de novo assembly of a [4Fe-4S] cluster on the scaffold complex cfd1-nbp35. Electrons are transferred to dre2 from NADPH via the FAD- and FMN-containing protein tah18. Tah18-dre2 are also required for the assembly of the diferric tyrosyl radical cofactor of ribonucleotide reductase (RNR), probably by providing electrons for reduction during radical cofactor maturation in the catalytic small subunit rnr2. This Talaromyces marneffei (strain ATCC 18224 / CBS 334.59 / QM 7333) (Penicillium marneffei) protein is Fe-S cluster assembly protein dre2.